The sequence spans 509 residues: Lysophospholipid acyltransferase (509 aa).

Over M1–S14 the chain is Lumenal. The chain crosses the membrane as a helical span at residues F15–F35. Residues A36 to S55 are Cytoplasmic-facing. A helical transmembrane segment spans residues I56–F76. The Lumenal segment spans residues D77–P94. A helical membrane pass occupies residues W95–Y115. Topologically, residues P116–R223 are cytoplasmic. Residues G224 to L244 form a helical membrane-spanning segment. At T245 to P246 the chain is on the lumenal side. Residues K247–A267 traverse the membrane as a helical segment. Topologically, residues R268–D410 are cytoplasmic. The active site involves H363. Residues V411–L431 traverse the membrane as a helical segment. Topologically, residues N432–K441 are lumenal. The helical transmembrane segment at E442 to I462 threads the bilayer. Topologically, residues R463 to E509 are cytoplasmic. A disordered region spans residues S488–E509. Position 490 is a phosphoserine (S490). The segment covering P500–E509 has biased composition (basic and acidic residues).

It belongs to the membrane-bound acyltransferase family.

It localises to the endoplasmic reticulum membrane. It is found in the microsome membrane. It carries out the reaction a 1-acyl-sn-glycero-3-phosphate + an acyl-CoA = a 1,2-diacyl-sn-glycero-3-phosphate + CoA. It catalyses the reaction a 1-acyl-sn-glycero-3-phosphocholine + an acyl-CoA = a 1,2-diacyl-sn-glycero-3-phosphocholine + CoA. The enzyme catalyses a 1-acyl-sn-glycero-3-phosphoethanolamine + an acyl-CoA = a 1,2-diacyl-sn-glycero-3-phosphoethanolamine + CoA. Functionally, membrane-bound O-acyltransferase that mediates the incorporation of unsaturated acyl chains into the sn-2 position of phospholipids. The chain is Lysophospholipid acyltransferase (ale1) from Schizosaccharomyces pombe (strain 972 / ATCC 24843) (Fission yeast).